Here is an 89-residue protein sequence, read N- to C-terminus: Small ribosomal subunit protein uS17 (89 aa).

It belongs to the universal ribosomal protein uS17 family. As to quaternary structure, part of the 30S ribosomal subunit.

In terms of biological role, one of the primary rRNA binding proteins, it binds specifically to the 5'-end of 16S ribosomal RNA. The chain is Small ribosomal subunit protein uS17 from Polaromonas naphthalenivorans (strain CJ2).